The chain runs to 227 residues: KH domain-containing protein MJ0443 (227 aa).

KH domains are found at residues 14–77 (KSIE…RDIV) and 106–163 (DYAS…KEAV).

This is KH domain-containing protein MJ0443 from Methanocaldococcus jannaschii (strain ATCC 43067 / DSM 2661 / JAL-1 / JCM 10045 / NBRC 100440) (Methanococcus jannaschii).